Here is a 329-residue protein sequence, read N- to C-terminus: MRILSNVNLMGLLIVLLAAIFFCFHNVIVRILYSQQNILGIWQVGGFVTPTLSHSFLLLLLRMLWVVPLMALISQRLYGNTWREINQLKQPVNRPVIWEAMGCGFLMFLYLVLLYISISFIPTGIAITLFFTYPIFTALLAWRLFNDVPSLLRWLVIGLTLIGTFLTIPYAYGGEQQTLVLGVSTGIASGIVYAGYTVFAQRSFQRLHPVPFTWISFATTLILSILCLIIWQPHEGNLPWLAITIGSLLSALFTLAGHVLNNWGIHLIGASRAAIIGATNPALTVVLAGLAIQESLTNIQIFGVCLVTFSIALLNYEKVSPSTGKNSLK.

The next 10 helical transmembrane spans lie at 9–29 (LMGLLIVLLAAIFFCFHNVIV), 53–73 (SHSFLLLLLRMLWVVPLMALI), 105–125 (FLMFLYLVLLYISISFIPTGI), 126–146 (AITLFFTYPIFTALLAWRLFN), 154–174 (WLVIGLTLIGTFLTIPYAYGG), 179–199 (LVLGVSTGIASGIVYAGYTVF), 210–230 (VPFTWISFATTLILSILCLII), 240–260 (WLAITIGSLLSALFTLAGHVL), 273–293 (AAIIGATNPALTVVLAGLAIQ), and 296–316 (LTNIQIFGVCLVTFSIALLNY). EamA domains follow at residues 103–169 (CGFL…LTIP) and 191–316 (IVYA…LLNY).

It belongs to the EamA transporter family.

It localises to the cell membrane. This is an uncharacterized protein from Synechocystis sp. (strain ATCC 27184 / PCC 6803 / Kazusa).